Reading from the N-terminus, the 309-residue chain is Taste receptor type 2 member 20 (309 aa).

Residues 1–6 (MMSFLH) lie on the Extracellular side of the membrane. The chain crosses the membrane as a helical span at residues 7 to 27 (IVFSILVVVAFILGNFANGFI). Over 28–46 (ALINFIAWVKRQKISSADQ) the chain is Cytoplasmic. A helical transmembrane segment spans residues 47 to 67 (IIAALAVSRVGLLWVILLHWY). At 68 to 79 (STVLNPTSSNLK) the chain is on the extracellular side. A helical transmembrane segment spans residues 80 to 100 (VTIFISNAWAVTNHFSIWLAA). Residues 101 to 125 (SLSIFYLLKIVNFSRLIFHHLKRKA) are Cytoplasmic-facing. The helical transmembrane segment at 126 to 146 (KSVVLVIVLGSLFFLVCHLVM) threads the bilayer. At 147-178 (KSTYINVWTEEYEGNVTWKIKLRNAMHLSNLT) the chain is on the extracellular side. N-linked (GlcNAc...) asparagine glycans are attached at residues Asn161 and Asn176. Residues 179 to 199 (VAMLANLIPFTLTLISFLLLI) traverse the membrane as a helical segment. The Cytoplasmic portion of the chain corresponds to 200 to 229 (YSLCKHLKKMQLHGKGSQDPSTKIHIKALQ). The helical transmembrane segment at 230 to 250 (TVTSFLILLAIYFLCLITSFW) threads the bilayer. Over 251–259 (NSKMRPKEI) the chain is Extracellular. Residues 260 to 280 (VLMLCQAFGIIYPSFHSFILI) traverse the membrane as a helical segment. Residues 281 to 309 (WGNKTLKQTFLSVLWRVTCWAKGQNQSTP) are Cytoplasmic-facing.

This sequence belongs to the G-protein coupled receptor T2R family.

The protein localises to the membrane. In terms of biological role, receptor that may play a role in the perception of bitterness and is gustducin-linked. May play a role in sensing the chemical composition of the gastrointestinal content. The activity of this receptor may stimulate alpha gustducin, mediate PLC-beta-2 activation and lead to the gating of TRPM5. This chain is Taste receptor type 2 member 20 (TAS2R20), found in Gorilla gorilla gorilla (Western lowland gorilla).